We begin with the raw amino-acid sequence, 62 residues long: MLGKIKAAIDNSPGKPARILVSEKAFQQLEEEMRFVYVSKPKTIMGIPVEVSDQAESFKLEF.

This is an uncharacterized protein from Bacillus subtilis (strain 168).